Here is a 362-residue protein sequence, read N- to C-terminus: Diphosphomevalonate decarboxylase (362 aa).

(R)-5-diphosphomevalonate is bound by residues 17–20, Arg-72, 150–155, and Thr-206; these read YWGK and SGSACR.

Belongs to the diphosphomevalonate decarboxylase family. As to quaternary structure, homodimer.

The catalysed reaction is (R)-5-diphosphomevalonate + ATP = isopentenyl diphosphate + ADP + phosphate + CO2. It participates in isoprenoid biosynthesis; isopentenyl diphosphate biosynthesis via mevalonate pathway; isopentenyl diphosphate from (R)-mevalonate: step 3/3. Diphosphomevalonate decarboxylase; part of the second module of ergosterol biosynthesis pathway that includes the middle steps of the pathway. MVD1 converts diphosphomevalonate into isopentenyl diphosphate. The second module is carried out in the vacuole and involves the formation of farnesyl diphosphate, which is also an important intermediate in the biosynthesis of ubiquinone, dolichol, heme and prenylated proteins. Activity by the mevalonate kinase ERG12 first converts mevalonate into 5-phosphomevalonate. 5-phosphomevalonate is then further converted to 5-diphosphomevalonate by the phosphomevalonate kinase ERG8. The diphosphomevalonate decarboxylase MVD then produces isopentenyl diphosphate. The isopentenyl-diphosphate delta-isomerase IDI1 then catalyzes the 1,3-allylic rearrangement of the homoallylic substrate isopentenyl (IPP) to its highly electrophilic allylic isomer, dimethylallyl diphosphate (DMAPP). Finally the farnesyl diphosphate synthase ERG20 catalyzes the sequential condensation of isopentenyl pyrophosphate with dimethylallyl pyrophosphate, and then with the resultant geranylpyrophosphate to the ultimate product farnesyl pyrophosphate. This Candida albicans (strain SC5314 / ATCC MYA-2876) (Yeast) protein is Diphosphomevalonate decarboxylase.